The sequence spans 37 residues: Large ribosomal subunit protein bL36 (37 aa).

Belongs to the bacterial ribosomal protein bL36 family.

In Bifidobacterium adolescentis (strain ATCC 15703 / DSM 20083 / NCTC 11814 / E194a), this protein is Large ribosomal subunit protein bL36.